Consider the following 301-residue polypeptide: F1 operon positive regulatory protein (301 aa).

Residues 8-107 (NSIIQYIEEN…GYTPRQYRMI (100 aa)) enclose the HTH araC/xylS-type domain. 2 DNA-binding regions (H-T-H motif) span residues 26–47 (DCLVLYSGFSRRYLQISFKEYV) and 74–97 (IIEISAKLFYDSQQTFTREFKKIF).

Positive regulator of F1 operon expression. This is F1 operon positive regulatory protein (caf1R) from Yersinia pestis.